Here is a 310-residue protein sequence, read N- to C-terminus: Syntaxin-81 (310 aa).

At 1 to 289 (MSRFRDRTED…QAIQRNSSSR (289 aa)) the chain is on the cytoplasmic side. A coiled-coil region spans residues 77–114 (RTTEQEKDSIEQEVAAFIKACKEQIDILINSIRNEEAN). Residues 290 to 310 (TFLLLFFFVLTFSVLFLDWYS) traverse the membrane as a helical; Anchor for type IV membrane protein segment.

The protein belongs to the syntaxin family. Part of the t-SNARE complex. Interacts with MAG2.

It localises to the membrane. Vesicle trafficking protein that functions in the secretory pathway. This is Syntaxin-81 (SYP81) from Arabidopsis thaliana (Mouse-ear cress).